A 1133-amino-acid polypeptide reads, in one-letter code: Probable cation-transporting ATPase 9 (1133 aa).

The Cytoplasmic segment spans residues 1–6 (MRVSSI). The chain crosses the membrane as a helical span at residues 7 to 28 (EAEMENPIDVDKTDVEGELKIK). At 29–34 (QVTLLR) the chain is on the extracellular side. A helical membrane pass occupies residues 35-53 (ENIVKKIVFFLVAIFCSDR). The Cytoplasmic segment spans residues 54–167 (PSVLKKVFYE…IEINVPSFLT (114 aa)). The chain crosses the membrane as a helical span at residues 168–190 (LMWREFKKPINFLLYFGIIVWGI). At 191-193 (EQM) the chain is on the extracellular side. The helical transmembrane segment at 194-212 (YVSTAITVVFTTTINSLIC) threads the bilayer. Residues 213-363 (IYIRGVMQKL…PFNKKFQQQA (151 aa)) lie on the Cytoplasmic side of the membrane. The chain crosses the membrane as a helical span at residues 364–383 (VKLTILMATLLLIGFLSTLS). Over 384–396 (RLLDIELPPLFIA) the chain is Extracellular. Residues 397 to 418 (FRFLDILIYSAPPGMPMLIAIT) form a helical membrane-spanning segment. Residues 419–887 (NFVGLKRLKN…NSVEIFKGYL (469 aa)) are Cytoplasmic-facing. Asp451 (4-aspartylphosphate intermediate) is an active-site residue. The Mg(2+) site is built by Asp827 and Asp831. A helical transmembrane segment spans residues 888 to 906 (QVALLRYLGFLTLAYFYSS). At 907–915 (YSSGQMDWQ) the chain is on the extracellular side. Residues 916–931 (ALASGYFLVYLILGCN) form a helical membrane-spanning segment. The Cytoplasmic segment spans residues 932–948 (TPLKKLEKSVFDDNLFS). Residues 949–972 (IYNVTSVLFGFTLHILSIVGCVES) form a helical membrane-spanning segment. At 973 to 994 (LHASPIYKEVNSLDAENNFQFE) the chain is on the extracellular side. Residues 995 to 1018 (TQHNTVLNFNILINFFYVIISNHI) traverse the membrane as a helical segment. Topologically, residues 1019 to 1030 (GKPMKDRYYKNT) are cytoplasmic. A helical membrane pass occupies residues 1031–1050 (IAIYYDLGLIYTCKCMILQV). The Extracellular portion of the chain corresponds to 1051–1101 (LLILEHTHHGLIFLILLLDQEFSSSLTVQVYFSLPMNLFLPEEFSLNFTQE). Residues 1102 to 1124 (VKKEKELLICNSSSTILEVDYNL) traverse the membrane as a helical segment. Residues 1125 to 1133 (RLNYFQQNF) lie on the Cytoplasmic side of the membrane.

It belongs to the cation transport ATPase (P-type) (TC 3.A.3) family. Type V subfamily.

The protein localises to the membrane. The enzyme catalyses ATP + H2O = ADP + phosphate + H(+). The polypeptide is Probable cation-transporting ATPase 9 (TPA9) (Tetrahymena thermophila).